The chain runs to 443 residues: D(2) dopamine receptor (443 aa).

Residues 1–37 lie on the Extracellular side of the membrane; sequence MDPLNLSWYDDDLERQNWSRPFNGSDGKADRPHYNYY. Residues N5, N17, and N23 are each glycosylated (N-linked (GlcNAc...) asparagine). A helical transmembrane segment spans residues 38–60; it reads ATLLTLLIAVIVFGNVLVCMAVS. The Cytoplasmic segment spans residues 61–70; the sequence is REKALQTTTN. Residues 71–93 form a helical membrane-spanning segment; the sequence is YLIVSLAVADLLVATLVMPWVVY. At 94-108 the chain is on the extracellular side; that stretch reads LEVVGEWKFSKIHCD. Residues C107 and C182 are joined by a disulfide bond. The helical transmembrane segment at 109 to 130 threads the bilayer; sequence IFVTLDVMMCTASILNLCAISI. Residues 131–151 are Cytoplasmic-facing; sequence DRYTAVAMPMLYNTRYSSKRR. A helical membrane pass occupies residues 152-172; it reads VTVMIAIVWVLSFTISCPLLF. The Extracellular portion of the chain corresponds to 173 to 188; it reads GLNNADQNECIIANPA. The helical transmembrane segment at 189–213 threads the bilayer; the sequence is FVVYSSIVSFYVPFIVTLLVYIKIY. An interaction with PPP1R9B region spans residues 211–373; it reads KIYIVLRRRR…SQQKEKKATQ (163 aa). Residues 214–373 lie on the Cytoplasmic side of the membrane; that stretch reads IVLRRRRKRV…SQQKEKKATQ (160 aa). The disordered stretch occupies residues 281–332; sequence MEMLSSTSPPERTRYSPIPPSHHQLTLPDPSHHGLHSTPDSPAKPEKNGHAK. The chain crosses the membrane as a helical span at residues 374 to 395; sequence MLAIVLGVFIICWLPFFITHIL. Over 396–409 the chain is Extracellular; sequence NIHCDCNIPPVLYS. C399 and C401 form a disulfide bridge. The helical transmembrane segment at 410-431 threads the bilayer; that stretch reads AFTWLGYVNSAVNPIIYTTFNI. Residues 432–443 lie on the Cytoplasmic side of the membrane; it reads EFRKAFLKILHC. Residue C443 is the site of S-palmitoyl cysteine attachment.

It belongs to the G-protein coupled receptor 1 family. In terms of assembly, forms homo- and heterooligomers with DRD4. The interaction with DRD4 may modulate agonist-induced downstream signaling. Interacts with CADPS and CADPS2. Interacts with GPRASP1, PPP1R9B and CLIC6. Interacts with ARRB2. Interacts with HTR2A. Interacts with DRD1. Interacts with KCNA2. Post-translationally, palmitoylated. Palmitoylation which is required for proper localization to the plasma membrane and stability of the receptor could be carried on by ZDHHC4, ZDHHC3 and ZDHHC8.

It localises to the cell membrane. The protein localises to the golgi apparatus membrane. Dopamine receptor whose activity is mediated by G proteins which inhibit adenylyl cyclase. Positively regulates postnatal regression of retinal hyaloid vessels via suppression of VEGFR2/KDR activity, downstream of OPN5. This chain is D(2) dopamine receptor (DRD2), found in Chlorocebus aethiops (Green monkey).